The primary structure comprises 309 residues: Foldase protein PrsA 2 (309 aa).

Positions 1-22 (MKQMNKLITGVVTLATVVTLSA) are cleaved as a signal peptide. C23 carries the N-palmitoyl cysteine lipid modification. The S-diacylglycerol cysteine moiety is linked to residue C23. The region spanning 146 to 241 (TPTMTAEIMQ…RTYHIIKVTK (96 aa)) is the PpiC domain.

Belongs to the PrsA family.

The protein localises to the cell membrane. The catalysed reaction is [protein]-peptidylproline (omega=180) = [protein]-peptidylproline (omega=0). Plays a major role in protein secretion by helping the post-translocational extracellular folding of several secreted proteins. The chain is Foldase protein PrsA 2 (prsA2) from Streptococcus pyogenes serotype M1.